A 329-amino-acid polypeptide reads, in one-letter code: Vitamin B12 import system permease protein BtuC (329 aa).

9 consecutive transmembrane segments (helical) span residues 22 to 42, 64 to 84, 91 to 111, 115 to 135, 149 to 169, 187 to 207, 243 to 263, 277 to 297, and 305 to 325; these read LSVLMLLAVVLSLCAGDQWIA, LAVLLVGAALALSGAVMQALF, PGLLGVSNGAGVGLIAAVLLG, LPGWALGFCAIAGALIITLIL, LLAGVALGIICSAMMTWAIYF, GGVDWQQAWLMIALIPVSLWI, GWMVGVSVALAGSIGFIGLVI, ALLPGCALAGAIALLLADVIA, and ELPIGVVTATMGAPVFIWLLL.

It belongs to the binding-protein-dependent transport system permease family. FecCD subfamily. The complex is composed of two ATP-binding proteins (BtuD), two transmembrane proteins (BtuC) and a solute-binding protein (BtuF).

It is found in the cell inner membrane. Part of the ABC transporter complex BtuCDF involved in vitamin B12 import. Involved in the translocation of the substrate across the membrane. In Citrobacter koseri (strain ATCC BAA-895 / CDC 4225-83 / SGSC4696), this protein is Vitamin B12 import system permease protein BtuC.